Here is a 466-residue protein sequence, read N- to C-terminus: Argininosuccinate lyase (466 aa).

The protein belongs to the lyase 1 family. Argininosuccinate lyase subfamily.

It is found in the cytoplasm. It carries out the reaction 2-(N(omega)-L-arginino)succinate = fumarate + L-arginine. It participates in amino-acid biosynthesis; L-arginine biosynthesis; L-arginine from L-ornithine and carbamoyl phosphate: step 3/3. This is Argininosuccinate lyase from Brucella canis (strain ATCC 23365 / NCTC 10854 / RM-666).